The chain runs to 181 residues: MQAATLSFQPSAPPLQTSAFHFSSKQPNQLKYSLFSYTCPILKRSLLSTQTLSRKSICKPPDVATGKYVREDYLVKKVSAKDIQELIKGERNVPLIIDFYATWCGPCILMAQELEMLAVEYESNALIVKVDTDDEYEFARDMQVRGLPTLYFISPDPNKDAIRTEGLIPIQMMRDIINNDL.

The transit peptide at 1–70 (MQAATLSFQP…PDVATGKYVR (70 aa)) directs the protein to the chloroplast. In terms of domain architecture, Thioredoxin spans 72 to 181 (DYLVKKVSAK…MMRDIINNDL (110 aa)). Residues Cys104 and Cys107 each act as nucleophile in the active site. The cysteines at positions 104 and 107 are disulfide-linked.

This sequence belongs to the thioredoxin family. Plant CITRX-type subfamily.

It is found in the plastid. Its subcellular location is the chloroplast. Probable thiol-disulfide oxidoreductase that may play a role in proper chloroplast development. In Nicotiana benthamiana, this protein is Thioredoxin-like protein CITRX2, chloroplastic.